A 257-amino-acid polypeptide reads, in one-letter code: Acetylglutamate kinase (257 aa).

Residues 43 to 44 (GG), arginine 65, and asparagine 157 contribute to the substrate site. Residues 180–185 (DVSGIL) and 208–210 (IIT) each bind ATP.

This sequence belongs to the acetylglutamate kinase family. ArgB subfamily. In terms of assembly, homodimer.

The protein resides in the cytoplasm. It catalyses the reaction N-acetyl-L-glutamate + ATP = N-acetyl-L-glutamyl 5-phosphate + ADP. It functions in the pathway amino-acid biosynthesis; L-arginine biosynthesis; N(2)-acetyl-L-ornithine from L-glutamate: step 2/4. Catalyzes the ATP-dependent phosphorylation of N-acetyl-L-glutamate. The polypeptide is Acetylglutamate kinase (Klebsiella pneumoniae (strain 342)).